We begin with the raw amino-acid sequence, 299 residues long: Apolipoprotein E (299 aa).

A signal peptide spans 1 to 18; that stretch reads MKALWAVLVVTLLAGCRA. 8 consecutive repeat copies span residues 74–95, 96–117, 118–139, 140–161, 162–183, 184–205, 206–223, and 224–245. The 8 X 22 AA approximate tandem repeats stretch occupies residues 74–245; the sequence is VLMEDTMKEV…RLDEVREQME (172 aa). The interval 152 to 162 is LDL and other lipoprotein receptors binding; that stretch reads HLRKLRKRLLR. Residue 156 to 159 coordinates heparin; the sequence is LRKR. Residues 204 to 273 are lipid-binding and lipoprotein association; sequence AALTGQPLRE…GWFEPMMEDM (70 aa). 219–226 provides a ligand contact to heparin; it reads GERLRGRL. The segment at 261 to 273 is specificity for association with VLDL; the sequence is RLKGWFEPMMEDM.

Belongs to the apolipoprotein A1/A4/E family. Homotetramer. May interact with ABCA1; functionally associated with ABCA1 in the biogenesis of HDLs. May interact with APP/A4 amyloid-beta peptide; the interaction is extremely stable in vitro but its physiological significance is unclear. May interact with MAPT. May interact with MAP2. In the cerebrospinal fluid, interacts with secreted SORL1. Interacts with PMEL; this allows the loading of PMEL luminal fragment on ILVs to induce fibril nucleation. In terms of processing, APOE exists as multiple glycosylated and sialylated glycoforms within cells and in plasma. The extent of glycosylation and sialylation are tissue and context specific. Post-translationally, glycated in plasma VLDL. Phosphorylated by FAM20C in the extracellular medium.

It is found in the secreted. It localises to the extracellular space. The protein resides in the extracellular matrix. Its subcellular location is the extracellular vesicle. The protein localises to the endosome. It is found in the multivesicular body. APOE is an apolipoprotein, a protein associating with lipid particles, that mainly functions in lipoprotein-mediated lipid transport between organs via the plasma and interstitial fluids. APOE is a core component of plasma lipoproteins and is involved in their production, conversion and clearance. Apolipoproteins are amphipathic molecules that interact both with lipids of the lipoprotein particle core and the aqueous environment of the plasma. As such, APOE associates with chylomicrons, chylomicron remnants, very low density lipoproteins (VLDL) and intermediate density lipoproteins (IDL) but shows a preferential binding to high-density lipoproteins (HDL). It also binds a wide range of cellular receptors including the LDL receptor/LDLR and the very low-density lipoprotein receptor/VLDLR that mediate the cellular uptake of the APOE-containing lipoprotein particles. Finally, APOE also has a heparin-binding activity and binds heparan-sulfate proteoglycans on the surface of cells, a property that supports the capture and the receptor-mediated uptake of APOE-containing lipoproteins by cells. This Heterocephalus glaber (Naked mole rat) protein is Apolipoprotein E (APOE).